We begin with the raw amino-acid sequence, 159 residues long: Ascorbate-specific PTS system EIIA component (159 aa).

A PTS EIIA type-2 domain is found at 9 to 152 (VLKQHHTVRL…TSLFAVIDRV (144 aa)). His71 acts as the Tele-phosphohistidine intermediate in catalysis. His71 carries the phosphohistidine modification.

It is found in the cytoplasm. The phosphoenolpyruvate-dependent sugar phosphotransferase system (sugar PTS), a major carbohydrate active transport system, catalyzes the phosphorylation of incoming sugar substrates concomitantly with their translocation across the cell membrane. The enzyme II UlaABC PTS system is involved in ascorbate transport. In Mycoplasma pneumoniae (strain ATCC 29342 / M129 / Subtype 1) (Mycoplasmoides pneumoniae), this protein is Ascorbate-specific PTS system EIIA component (ulaC).